We begin with the raw amino-acid sequence, 297 residues long: HTH-type transcriptional regulator ArgP (297 aa).

An HTH lysR-type domain is found at 2–58 (FDYKLLSALAAVVEQAGFERAAQVLGLSQSAISQRIKLLEARVGQPVLVRGTPPSPT). Residues 19-38 (FERAAQVLGLSQSAISQRIK) constitute a DNA-binding region (H-T-H motif).

It belongs to the LysR transcriptional regulatory family. In terms of assembly, homodimer.

Its function is as follows. Controls the transcription of genes involved in arginine and lysine metabolism. This Pseudomonas fluorescens (strain Pf0-1) protein is HTH-type transcriptional regulator ArgP.